The following is a 315-amino-acid chain: Methionyl-tRNA formyltransferase (315 aa).

113–116 (SLLP) provides a ligand contact to (6S)-5,6,7,8-tetrahydrofolate.

The protein belongs to the Fmt family.

It catalyses the reaction L-methionyl-tRNA(fMet) + (6R)-10-formyltetrahydrofolate = N-formyl-L-methionyl-tRNA(fMet) + (6S)-5,6,7,8-tetrahydrofolate + H(+). Functionally, attaches a formyl group to the free amino group of methionyl-tRNA(fMet). The formyl group appears to play a dual role in the initiator identity of N-formylmethionyl-tRNA by promoting its recognition by IF2 and preventing the misappropriation of this tRNA by the elongation apparatus. In Shigella sonnei (strain Ss046), this protein is Methionyl-tRNA formyltransferase.